The following is a 278-amino-acid chain: Large ribosomal subunit protein uL2 (278 aa).

2 disordered regions span residues Met1–His58 and Val225–Arg278. The span at Leu37 to His58 shows a compositional bias: basic residues. A compositionally biased stretch (basic and acidic residues) spans Pro253 to Ile267. The span at Val268–Arg278 shows a compositional bias: basic residues.

It belongs to the universal ribosomal protein uL2 family. As to quaternary structure, part of the 50S ribosomal subunit. Forms a bridge to the 30S subunit in the 70S ribosome.

In terms of biological role, one of the primary rRNA binding proteins. Required for association of the 30S and 50S subunits to form the 70S ribosome, for tRNA binding and peptide bond formation. It has been suggested to have peptidyltransferase activity; this is somewhat controversial. Makes several contacts with the 16S rRNA in the 70S ribosome. The sequence is that of Large ribosomal subunit protein uL2 from Rhodococcus erythropolis (strain PR4 / NBRC 100887).